A 124-amino-acid polypeptide reads, in one-letter code: Ragulator complex protein LAMTOR3 (124 aa).

The required for interaction with LAMTOR2 stretch occupies residues 57–70 (TDQGSKLGLSKNKS).

It belongs to the LAMTOR3 family. Part of the Ragulator complex composed of LAMTOR1, LAMTOR2, LAMTOR3, LAMTOR4 and LAMTOR5. LAMTOR4 and LAMTOR5 form a heterodimer that interacts, through LAMTOR1, with a LAMTOR2, LAMTOR3 heterodimer. The Ragulator complex interacts with both the mTORC1 complex and heterodimers constituted of the Rag GTPases RagA/RRAGA, RagB/RRAGB, RagC/RRAGC and RagD/RRAGD; regulated by amino acid availability. The Ragulator complex interacts with SLC38A9; the probable amino acid sensor. Interacts with LAMTOR1 and LAMTOR2; the interaction is direct. Component of the lysosomal folliculin complex (LFC), composed of FLCN, FNIP1 (or FNIP2), RagA/RRAGA or RagB/RRAGB GDP-bound, RagC/RRAGC or RagD/RRAGD GTP-bound, and Ragulator. Interacts with MAP2K1/MEK1 and MAPK2. Interacts with MORG1.

The protein localises to the late endosome membrane. In terms of biological role, as part of the Ragulator complex it is involved in amino acid sensing and activation of mTORC1, a signaling complex promoting cell growth in response to growth factors, energy levels, and amino acids. Activated by amino acids through a mechanism involving the lysosomal V-ATPase, the Ragulator plays a dual role for the small GTPases Rag (RagA/RRAGA, RagB/RRAGB, RagC/RRAGC and/or RagD/RRAGD): it (1) acts as a guanine nucleotide exchange factor (GEF), activating the small GTPases Rag and (2) mediates recruitment of Rag GTPases to the lysosome membrane. Activated Ragulator and Rag GTPases function as a scaffold recruiting mTORC1 to lysosomes where it is in turn activated. Adapter protein that enhances the efficiency of the MAP kinase cascade facilitating the activation of MAPK2. The polypeptide is Ragulator complex protein LAMTOR3 (Lamtor3) (Mus musculus (Mouse)).